The primary structure comprises 159 residues: UPF0260 protein Avi_1324 (159 aa).

The protein belongs to the UPF0260 family.

This Allorhizobium ampelinum (strain ATCC BAA-846 / DSM 112012 / S4) (Agrobacterium vitis (strain S4)) protein is UPF0260 protein Avi_1324.